The chain runs to 542 residues: MDRNKRRLESSQLRESSSPNSQNKPNAMEEIKRRRLQLEQRLAQQAQVPWEKRSENGNNAGMETIQNRISELKEKTAKRFNANIPKSEGLFRDDSNGAKGGLKVGIHPVLLDGNIQNTILTPENRKRTASFSTKGVSLSQHQLLKPPAITEQNPFLDTAPTPRLEDSPFYDPRTKESRKTRGSRNLHLNESGKFIEEANQARRQARLEDLKKRIALHSHKAGIEDELDITSKSIGRDTIPNIEWWDLPFIKDYNDYGDENNWLIDGPQSIINSAIQHPIPVLPPYAKNQPSSHSVFLTKKEQKKIRRQTRAEARKEKQDRQLLGIEPPEPPKVKLSNLMHVLGDDAIKDPTKIEAEVRKQVEERRLRHERENEERKLTPEERKEKAFRKKDEDSAAGLRCLVFRIKYLAHRPHRLKIDLNAKQWGATGVCILNANFNLVIFEAGQKAIKKLKRLMLERIDWTDTSRNSIIAQGNKLVDTEGRELNYTENTCNLVWEGEIGRRAFRYWSFRSCPSENDAKSYLEEQGGAEHFWMLAKSWSENV.

Disordered stretches follow at residues 1–32 (MDRNKRRLESSQLRESSSPNSQNKPNAMEEIK), 151–191 (EQNP…LNES), 290–329 (PSSHSVFLTKKEQKKIRRQTRAEARKEKQDRQLLGIEPPE), and 367–388 (RHERENEERKLTPEERKEKAFR). Low complexity predominate over residues 10–22 (SSQLRESSSPNSQ). The span at 309–320 (TRAEARKEKQDR) shows a compositional bias: basic and acidic residues.

In terms of assembly, component of the U4/U5/U6 tri-snRNP complex.

It is found in the nucleus. The protein localises to the cytoplasm. It localises to the cytoskeleton. Its subcellular location is the spindle. The protein resides in the spindle pole. Participates in pre-mRNA splicing and in nuclear mRNA export. May play a role in the assembly of the U4/U5/U6 tri-snRNP complex. In Schizosaccharomyces pombe (strain 972 / ATCC 24843) (Fission yeast), this protein is U4/U5/U6 small nuclear ribonucleoprotein prp3 (prp3).